The sequence spans 174 residues: Ribosome maturation factor RimP (174 aa).

Belongs to the RimP family.

The protein resides in the cytoplasm. In terms of biological role, required for maturation of 30S ribosomal subunits. The chain is Ribosome maturation factor RimP from Bdellovibrio bacteriovorus (strain ATCC 15356 / DSM 50701 / NCIMB 9529 / HD100).